We begin with the raw amino-acid sequence, 410 residues long: UDP-N-acetylglucosamine--dolichyl-phosphate N-acetylglucosaminephosphotransferase (410 aa).

Residues 1–10 (MWAFPELPLP) lie on the Lumenal side of the membrane. Residues 11–40 (LPLLVNLIGSLLGFVATVTLIPAFRSHFIA) form a helical membrane-spanning segment. Residues 41–60 (ARLCGQDLNKLSQQQIPESQ) are Cytoplasmic-facing. UDP-N-acetyl-alpha-D-glucosamine contacts are provided by residues 46 to 48 (QDL) and Glu58. A helical transmembrane segment spans residues 61 to 80 (GVISGAVFLIILFCFIPFPF). At 81–93 (LNCFVEEQCKAFP) the chain is on the lumenal side. Residues 94-120 (HHEFVALIGALLAICCMIFLGFADDVL) traverse the membrane as a helical segment. Residues 121–123 (NLR) are Cytoplasmic-facing. Residues 124–145 (WRHKLLLPTAASLPLLMVYFTN) traverse the membrane as a helical segment. Lys127 is a binding site for dolichyl phosphate. The Lumenal portion of the chain corresponds to 146–168 (FGNTTIVVPKPFRWILGLHLDLG). N-linked (GlcNAc...) asparagine glycosylation is present at Asn148. A helical transmembrane segment spans residues 169–188 (ILYYVYMGLLAVFCTNAINI). Position 180–188 (180–188 (VFCTNAINI)) interacts with dolichyl phosphate. Mg(2+) is bound at residue Asn187. Residues 189 to 194 (LAGING) are Cytoplasmic-facing. Asn193 provides a ligand contact to UDP-N-acetyl-alpha-D-glucosamine. A helical membrane pass occupies residues 195-215 (LEAGQSLVISASIIVFNLVEL). Over 216–220 (EGDYR) the chain is Lumenal. A helical transmembrane segment spans residues 221-244 (DDHIFSLYFMIPFFFTTLGLLYHN). The Cytoplasmic portion of the chain corresponds to 245 to 252 (WYPSRVFV). Residues 253 to 271 (GDTFCYFAGMTFAVVGILG) traverse the membrane as a helical segment. Asp254 contacts Mg(2+). Topologically, residues 272-273 (HF) are lumenal. A helical transmembrane segment spans residues 274 to 295 (SKTMLLFFMPQVFNFLYSLPQL). The Cytoplasmic segment spans residues 296-377 (FHIIPCPRHR…LLLKVFGPIH (82 aa)). A UDP-N-acetyl-alpha-D-glucosamine-binding site is contributed by 303-305 (RHR). A helical transmembrane segment spans residues 378–402 (ERNLTLLLLLLQVLSSAATFSIRYQ). Residues 403 to 410 (LVRLFYDV) lie on the Lumenal side of the membrane.

Belongs to the glycosyltransferase 4 family. In terms of assembly, homodimer. Mg(2+) is required as a cofactor.

The protein resides in the endoplasmic reticulum membrane. It carries out the reaction a di-trans,poly-cis-dolichyl phosphate + UDP-N-acetyl-alpha-D-glucosamine = an N-acetyl-alpha-D-glucosaminyl-diphospho-di-trans,poly-cis-dolichol + UMP. It participates in protein modification; protein glycosylation. Inhibited by natural nucleoside antibiotic tunicamycin, which acts as a structural analog and competitor of UDP-GlcNAc. UDP-N-acetylglucosamine--dolichyl-phosphate N-acetylglucosaminephosphotransferase that operates in the biosynthetic pathway of dolichol-linked oligosaccharides, the glycan precursors employed in protein asparagine (N)-glycosylation. The assembly of dolichol-linked oligosaccharides begins on the cytosolic side of the endoplasmic reticulum membrane and finishes in its lumen. The sequential addition of sugars to dolichol pyrophosphate produces dolichol-linked oligosaccharides containing fourteen sugars, including two GlcNAcs, nine mannoses and three glucoses. Once assembled, the oligosaccharide is transferred from the lipid to nascent proteins by oligosaccharyltransferases. Catalyzes the initial step of dolichol-linked oligosaccharide biosynthesis, transfering GlcNAc-1-P from cytosolic UDP-GlcNAc onto the carrier lipid dolichyl phosphate (P-dolichol), yielding GlcNAc-P-P-dolichol embedded in the cytoplasmic leaflet of the endoplasmic reticulum membrane. This is UDP-N-acetylglucosamine--dolichyl-phosphate N-acetylglucosaminephosphotransferase from Mus musculus (Mouse).